Consider the following 327-residue polypeptide: Putative gluconeogenesis factor (327 aa).

The protein belongs to the gluconeogenesis factor family.

It localises to the cytoplasm. Its function is as follows. Required for morphogenesis under gluconeogenic growth conditions. The chain is Putative gluconeogenesis factor (yjiF) from Lactococcus lactis subsp. lactis (strain IL1403) (Streptococcus lactis).